We begin with the raw amino-acid sequence, 136 residues long: Protein NrdI (136 aa).

It belongs to the NrdI family.

Probably involved in ribonucleotide reductase function. This is Protein NrdI from Erwinia tasmaniensis (strain DSM 17950 / CFBP 7177 / CIP 109463 / NCPPB 4357 / Et1/99).